The chain runs to 203 residues: NADH-quinone oxidoreductase subunit C (203 aa).

It belongs to the complex I 30 kDa subunit family. In terms of assembly, NDH-1 is composed of 14 different subunits. Subunits NuoB, C, D, E, F, and G constitute the peripheral sector of the complex.

Its subcellular location is the cell inner membrane. It catalyses the reaction a quinone + NADH + 5 H(+)(in) = a quinol + NAD(+) + 4 H(+)(out). Functionally, NDH-1 shuttles electrons from NADH, via FMN and iron-sulfur (Fe-S) centers, to quinones in the respiratory chain. The immediate electron acceptor for the enzyme in this species is believed to be ubiquinone. Couples the redox reaction to proton translocation (for every two electrons transferred, four hydrogen ions are translocated across the cytoplasmic membrane), and thus conserves the redox energy in a proton gradient. This Methylibium petroleiphilum (strain ATCC BAA-1232 / LMG 22953 / PM1) protein is NADH-quinone oxidoreductase subunit C.